The sequence spans 35 residues: U2-agatoxin-Aop1a (35 aa).

Cystine bridges form between Cys-3-Cys-19, Cys-10-Cys-24, and Cys-18-Cys-34. Leu-35 carries the post-translational modification Leucine amide.

It belongs to the neurotoxin 01 (U2-agtx) family. In terms of tissue distribution, expressed by the venom gland.

Its subcellular location is the secreted. Insect-selective toxin causing rapid but reversible paralysis in crickets. Suppresses the excitatory postsynaptic potentials evoked in lobster neuromuscular synaptic preparations, possibly by blocking the presynaptic calcium channel (Cav). Induces instantaneous reversible paralysis when injected into crickets. This Allagelena opulenta (Funnel weaving spider) protein is U2-agatoxin-Aop1a.